The sequence spans 227 residues: 2,3-bisphosphoglycerate-dependent phosphoglycerate mutase (227 aa).

Substrate is bound by residues Arg8–Asn15, Thr21–Gly22, Arg58, Glu110–Tyr113, Lys121, Arg137–Arg138, and Gly181–Asn182. The active-site Tele-phosphohistidine intermediate is the His9. The active-site Proton donor/acceptor is Glu110.

This sequence belongs to the phosphoglycerate mutase family. BPG-dependent PGAM subfamily.

The enzyme catalyses (2R)-2-phosphoglycerate = (2R)-3-phosphoglycerate. It participates in carbohydrate degradation; glycolysis; pyruvate from D-glyceraldehyde 3-phosphate: step 3/5. Functionally, catalyzes the interconversion of 2-phosphoglycerate and 3-phosphoglycerate. The protein is 2,3-bisphosphoglycerate-dependent phosphoglycerate mutase of Chlamydia caviae (strain ATCC VR-813 / DSM 19441 / 03DC25 / GPIC) (Chlamydophila caviae).